A 205-amino-acid chain; its full sequence is Holliday junction branch migration complex subunit RuvA (205 aa).

The tract at residues 1–64 is domain I; that stretch reads MIGRLRGVLV…EDAQLLYGFI (64 aa). The interval 65–143 is domain II; sequence TKQERALFRL…SLLETSAGSE (79 aa). The interval 144–156 is flexible linker; the sequence is REFMLKSNYTPAP. The tract at residues 157-205 is domain III; sequence VVNTAEEDAIAALLSLGYKPAQASKAVSAAFKEGMSSEDLIKSSLKSML.

Belongs to the RuvA family. Homotetramer. Forms an RuvA(8)-RuvB(12)-Holliday junction (HJ) complex. HJ DNA is sandwiched between 2 RuvA tetramers; dsDNA enters through RuvA and exits via RuvB. An RuvB hexamer assembles on each DNA strand where it exits the tetramer. Each RuvB hexamer is contacted by two RuvA subunits (via domain III) on 2 adjacent RuvB subunits; this complex drives branch migration. In the full resolvosome a probable DNA-RuvA(4)-RuvB(12)-RuvC(2) complex forms which resolves the HJ.

Its subcellular location is the cytoplasm. In terms of biological role, the RuvA-RuvB-RuvC complex processes Holliday junction (HJ) DNA during genetic recombination and DNA repair, while the RuvA-RuvB complex plays an important role in the rescue of blocked DNA replication forks via replication fork reversal (RFR). RuvA specifically binds to HJ cruciform DNA, conferring on it an open structure. The RuvB hexamer acts as an ATP-dependent pump, pulling dsDNA into and through the RuvAB complex. HJ branch migration allows RuvC to scan DNA until it finds its consensus sequence, where it cleaves and resolves the cruciform DNA. This is Holliday junction branch migration complex subunit RuvA from Shewanella woodyi (strain ATCC 51908 / MS32).